We begin with the raw amino-acid sequence, 241 residues long: Accessory protein p30II (241 aa).

Short sequence motifs (nuclear localization signal) lie at residues R73 to R78 and G91 to R98. 2 stretches are compositionally biased toward low complexity: residues C79–S100 and P107–S136. The segment at C79–T151 is disordered. Residues L175 to R184 carry the Mitochondrial targeting signal motif.

Belongs to the HTLV-1 accessory protein p30II family. As to quaternary structure, p30II binds to the KIX domains of CREBBP and EP300.

The protein localises to the host nucleus. The protein resides in the host nucleolus. It localises to the host mitochondrion inner membrane. P30II is a multifunctional regulator that sequesters EP300/CREBBP and down-regulates CREB-responsive element (CRE) and Tax-responsive element (TRE) mediated transcription. Specifically binds and represses tax/rex mRNA nuclear export. Since Tax and Rex are positive regulators of viral gene expression, their inhibition by p30II reduces virion production, and allows the virus to escape the host immune surveillance and persist latently in an immune-competent host. Functionally, p13II increases mitochondrial permeability to monovalent cations, producing a rapid, membrane potential-dependent influx of potassium. This could involve a channel-forming activity. Interferes with cell proliferation and transformation and promotes apoptosis induced by ceramide and Fas ligand, probably using the Ras signaling. The sequence is that of Accessory protein p30II from Human T-cell leukemia virus 1 (strain Japan ATK-1 subtype A) (HTLV-1).